Here is a 130-residue protein sequence, read N- to C-terminus: Protein ApaG (130 aa).

Residues 3–127 (RALTRDIEVV…FSLDSPGLLR (125 aa)) enclose the ApaG domain. The disordered stretch occupies residues 63–83 (EVTGPGVVGEQPRLSPGDTYE).

The sequence is that of Protein ApaG from Rhizobium etli (strain ATCC 51251 / DSM 11541 / JCM 21823 / NBRC 15573 / CFN 42).